A 343-amino-acid polypeptide reads, in one-letter code: Transcription factor MYB83 (343 aa).

The segment covering 1-16 (MMMRKPDITTIRDKGK) has biased composition (basic and acidic residues). Residues 1–33 (MMMRKPDITTIRDKGKPNHACGGNNNKPKLRKG) form a disordered region. HTH myb-type domains follow at residues 27 to 79 (KPKL…INYL) and 80 to 134 (RPDL…KKRL). 2 DNA-binding regions (H-T-H motif) span residues 55–79 (WSDI…INYL) and 107–130 (WSQI…NSTL). The segment at 134–172 (LKNNSNNNTSSGSSPNNSNSNSLDPRDQHVDMGGNSTSL) is disordered. The span at 136–155 (NNSNNNTSSGSSPNNSNSNS) shows a compositional bias: low complexity.

In terms of tissue distribution, expressed specifically in fiber and vessel cells that are undergoing secondary wall thickening in floral stems. Expressed in vessels but not in xylary fibers in the developing secondary xylem of roots.

The protein resides in the nucleus. Transcription factor that acts as a molecular switch in the NAC012/SND1-mediated transcriptional network regulating secondary wall biosynthesis. Is directly activated by NAC012/SND1 and its close homologs, including NAC043/NST1, NAC066/NST2, NAC101/VND6 and NAC030/VND7. Is required for functional expression of a number of secondary wall-associated transcription factors and secondary wall biosynthetic genes involved in cellulose, xylan and lignin synthesis. Functions redundantly with MYB46 in the transcriptional regulatory cascade leading to secondary wall formation in fibers and vessels. Transcription activator that binds to the DNA consensus sequence 5'-ACC[AT]A[AC][TC]-3', designated as the secondary wall MYB-responsive element (SMRE). Regulates directly numerous transcription factors and a number of genes involved in secondary wall biosynthesis that contain SMRE elements in their promoters. This is Transcription factor MYB83 from Arabidopsis thaliana (Mouse-ear cress).